Consider the following 90-residue polypeptide: uncharacterized protein (90 aa).

This is an uncharacterized protein from Aedes vexans (Inland floodwater mosquito).